The sequence spans 1516 residues: Receptor-type tyrosine-protein phosphatase S (1516 aa).

An N-terminal signal peptide occupies residues 1-28 (MRILPSPGMPALLSLVSLLSVLLMGCVA). Over 29–854 (ESPPVFIKKP…PQPIIDGEEG (826 aa)) the chain is Extracellular. Ig-like C2-type domains lie at 32 to 122 (PVFI…AKLT), 134 to 223 (PNID…ANLY), and 235 to 317 (PRFS…AQIT). 2 disulfide bridges follow: Cys-53-Cys-106 and Cys-155-Cys-206. Residues 67 to 71 (KKGKK) are important for binding to glycosaminoglycan chains. N-linked (GlcNAc...) asparagine glycosylation is found at Asn-253 and Asn-298. Cys-256 and Cys-301 form a disulfide bridge. 4 Fibronectin type-III domains span residues 324-414 (APGT…TGEQ), 419-513 (APRN…TQQG), 517-606 (QPMN…TLQS), and 608-692 (LPKN…TAAN). A helical transmembrane segment spans residues 855 to 875 (LIWVIGPVLAVVFIICIVIAI). At 876–1516 (LLYKNKRKDS…YLGSFDHYAT (641 aa)) the chain is on the cytoplasmic side. 2 consecutive Tyrosine-protein phosphatase domains span residues 961–1216 (LSQE…LLEA) and 1248–1507 (MELE…ALEY). Residues Cys-1157 and Cys-1448 each act as phosphocysteine intermediate in the active site.

Belongs to the protein-tyrosine phosphatase family. Receptor class 2A subfamily. As to quaternary structure, homodimer. Binding to large heparan sulfate proteoglycan structures promotes oligomerization. Binding to chondroitin sulfate proteoglycan does not lead to oligomerization. Interacts (via Ig-like domains) with NTRK1 and NTRK3, but does not form detectable complexes with NTRK2. Interacts (via extracellular domain) with the heparan sulfate proteoglycans AGRN and COL18A1. In terms of processing, a cleavage occurs, separating the extracellular domain from the transmembrane segment. This process called 'ectodomain shedding' is thought to be involved in receptor desensitization, signal transduction and/or membrane localization. As to expression, detected in embryonic brain, dorsal root ganglion and spinal cord. Detected in embryonic retina (at protein level). Detected in embryonic brain, spinal cord, dorsal root ganglion, trigeminal ganglion, ganglia associated with the precardinal vein and vagus nerve, the inner and outer nuclear layer of the retina, limb, breast muscle, heart, gut and lung.

Its subcellular location is the cell membrane. The protein resides in the cell projection. It is found in the axon. The protein localises to the perikaryon. It localises to the cytoplasmic vesicle. Its subcellular location is the secretory vesicle. The protein resides in the synaptic vesicle membrane. It is found in the synapse. The protein localises to the synaptosome. It localises to the postsynaptic density. Its subcellular location is the neuron projection. The protein resides in the growth cone. It carries out the reaction O-phospho-L-tyrosyl-[protein] + H2O = L-tyrosyl-[protein] + phosphate. Functionally, cell surface receptor that binds to glycosaminoglycans, including chondroitin sulfate proteoglycans and heparan sulfate proteoglycans. Binding to chondroitin sulfate and heparan sulfate proteoglycans has opposite effects on PTPRS oligomerization and regulation of neurite outgrowth. Contributes to the inhibition of neurite and axonal outgrowth by chondroitin sulfate proteoglycans, also after nerve transection. Plays a role in stimulating neurite outgrowth in response to the heparan sulfate proteoglycan GPC2. Required for normal brain development, especially for normal development of the pituitary gland and the olfactory bulb. Functions as tyrosine phosphatase. Mediates dephosphorylation of NTRK1, NTRK2 and NTRK3. Plays a role in down-regulation of signaling cascades that lead to the activation of Akt and MAP kinases. Down-regulates TLR9-mediated activation of NF-kappa-B, as well as production of TNF, interferon alpha and interferon beta. The sequence is that of Receptor-type tyrosine-protein phosphatase S (PTPRS) from Gallus gallus (Chicken).